Here is a 290-residue protein sequence, read N- to C-terminus: Type II secretion system protein C (290 aa).

The Cytoplasmic portion of the chain corresponds to M1–P28. Residues L29–W46 traverse the membrane as a helical segment. Residues R47–E290 are Periplasmic-facing.

It belongs to the GSP C family.

It is found in the cell inner membrane. In terms of biological role, involved in a type II secretion system (T2SS, formerly general secretion pathway, GSP) for the export of proteins. This is Type II secretion system protein C (exeC) from Aeromonas hydrophila.